The sequence spans 350 residues: Galactokinase (350 aa).

14 to 17 contributes to the substrate binding site; sequence EHTD. Residues Ser-46 and 96–102 contribute to the ATP site; that span reads GAGLSSS. Residues Ser-102 and Glu-134 each coordinate Mg(2+). The Proton acceptor role is filled by Asp-146. Substrate is bound at residue Tyr-196.

The protein belongs to the GHMP kinase family. GalK subfamily.

It localises to the cytoplasm. It catalyses the reaction alpha-D-galactose + ATP = alpha-D-galactose 1-phosphate + ADP + H(+). It functions in the pathway carbohydrate metabolism; galactose metabolism. Functionally, catalyzes the transfer of the gamma-phosphate of ATP to D-galactose to form alpha-D-galactose-1-phosphate (Gal-1-P). The protein is Galactokinase of Thermotoga neapolitana (strain ATCC 49049 / DSM 4359 / NBRC 107923 / NS-E).